A 533-amino-acid polypeptide reads, in one-letter code: Putative replication factor C large subunit (533 aa).

Positions 1-11 are enriched in polar residues; sequence MSKTAKNTKTI. Residues 1–31 are disordered; the sequence is MSKTAKNTKTIKSVKSVNKDNKPNKDNKDDK. The segment covering 17–31 has biased composition (basic and acidic residues); that stretch reads VNKDNKPNKDNKDDK.

Belongs to the activator 1 large subunit family.

In terms of biological role, part of the RFC clamp loader complex which loads the PCNA sliding clamp onto DNA. The polypeptide is Putative replication factor C large subunit (Acanthamoeba polyphaga (Amoeba)).